We begin with the raw amino-acid sequence, 330 residues long: Methionyl-tRNA formyltransferase (330 aa).

Residue 116–119 (SLLP) coordinates (6S)-5,6,7,8-tetrahydrofolate.

It belongs to the Fmt family.

The enzyme catalyses L-methionyl-tRNA(fMet) + (6R)-10-formyltetrahydrofolate = N-formyl-L-methionyl-tRNA(fMet) + (6S)-5,6,7,8-tetrahydrofolate + H(+). Attaches a formyl group to the free amino group of methionyl-tRNA(fMet). The formyl group appears to play a dual role in the initiator identity of N-formylmethionyl-tRNA by promoting its recognition by IF2 and preventing the misappropriation of this tRNA by the elongation apparatus. The chain is Methionyl-tRNA formyltransferase from Nitratidesulfovibrio vulgaris (strain DP4) (Desulfovibrio vulgaris).